A 129-amino-acid chain; its full sequence is Thyroid hormone receptor alpha (129 aa).

Residues 26–129 (AEWELIRMVT…EIMSLRAAVR (104 aa)) enclose the NR LBD domain. Residue Arg-91 coordinates 3,3',5-triiodo-L-thyronine.

The protein belongs to the nuclear hormone receptor family. NR1 subfamily.

The protein resides in the nucleus. In terms of biological role, nuclear hormone receptor that can act as a repressor or activator of transcription. High affinity receptor for thyroid hormones, including triiodothyronine and thyroxine. The sequence is that of Thyroid hormone receptor alpha (thra1) from Sparus aurata (Gilthead sea bream).